A 343-amino-acid polypeptide reads, in one-letter code: Inositol 2-dehydrogenase 1 (343 aa).

Belongs to the Gfo/Idh/MocA family. Homotetramer.

The catalysed reaction is myo-inositol + NAD(+) = scyllo-inosose + NADH + H(+). Involved in the oxidation of myo-inositol (MI) to 2-keto-myo-inositol (2KMI or 2-inosose). The polypeptide is Inositol 2-dehydrogenase 1 (Mycolicibacterium vanbaalenii (strain DSM 7251 / JCM 13017 / BCRC 16820 / KCTC 9966 / NRRL B-24157 / PYR-1) (Mycobacterium vanbaalenii)).